A 415-amino-acid polypeptide reads, in one-letter code: CCA-adding enzyme (415 aa).

Residues S52 and R55 each coordinate ATP. S52 and R55 together coordinate CTP. The Mg(2+) site is built by D64, D66, and D116. 3 residues coordinate ATP: H139, K159, and Y168. H139, K159, and Y168 together coordinate CTP.

Belongs to the tRNA nucleotidyltransferase/poly(A) polymerase family. Archaeal CCA-adding enzyme subfamily. Homodimer. Requires Mg(2+) as cofactor.

The enzyme catalyses a tRNA precursor + 2 CTP + ATP = a tRNA with a 3' CCA end + 3 diphosphate. The catalysed reaction is a tRNA with a 3' CCA end + 2 CTP + ATP = a tRNA with a 3' CCACCA end + 3 diphosphate. Functionally, catalyzes the addition and repair of the essential 3'-terminal CCA sequence in tRNAs without using a nucleic acid template. Adds these three nucleotides in the order of C, C, and A to the tRNA nucleotide-73, using CTP and ATP as substrates and producing inorganic pyrophosphate. tRNA 3'-terminal CCA addition is required both for tRNA processing and repair. Also involved in tRNA surveillance by mediating tandem CCA addition to generate a CCACCA at the 3' terminus of unstable tRNAs. While stable tRNAs receive only 3'-terminal CCA, unstable tRNAs are marked with CCACCA and rapidly degraded. In Pyrobaculum neutrophilum (strain DSM 2338 / JCM 9278 / NBRC 100436 / V24Sta) (Thermoproteus neutrophilus), this protein is CCA-adding enzyme.